The chain runs to 202 residues: Dephospho-CoA kinase (202 aa).

In terms of domain architecture, DPCK spans 5 to 202 (IVGLTGGIAS…DADYRARSDR (198 aa)). 13–18 (ASGKSA) is a binding site for ATP.

It belongs to the CoaE family.

Its subcellular location is the cytoplasm. The catalysed reaction is 3'-dephospho-CoA + ATP = ADP + CoA + H(+). The protein operates within cofactor biosynthesis; coenzyme A biosynthesis; CoA from (R)-pantothenate: step 5/5. Functionally, catalyzes the phosphorylation of the 3'-hydroxyl group of dephosphocoenzyme A to form coenzyme A. In Xanthomonas oryzae pv. oryzae (strain MAFF 311018), this protein is Dephospho-CoA kinase.